A 354-amino-acid chain; its full sequence is Uroporphyrinogen decarboxylase (354 aa).

Substrate is bound by residues 27 to 31, Asp-77, Tyr-154, Ser-209, and His-327; that span reads RQAGR.

The protein belongs to the uroporphyrinogen decarboxylase family. As to quaternary structure, homodimer.

Its subcellular location is the cytoplasm. It carries out the reaction uroporphyrinogen III + 4 H(+) = coproporphyrinogen III + 4 CO2. It functions in the pathway porphyrin-containing compound metabolism; protoporphyrin-IX biosynthesis; coproporphyrinogen-III from 5-aminolevulinate: step 4/4. Its function is as follows. Catalyzes the decarboxylation of four acetate groups of uroporphyrinogen-III to yield coproporphyrinogen-III. The protein is Uroporphyrinogen decarboxylase of Shewanella baltica (strain OS185).